Consider the following 81-residue polypeptide: MKTLLLTLVVVTIVCLDLGYTLTCCNQQSSQPKTTTDCADDSCYKKTWKDHRGTRIERGCGCPQVKPGIKLECCKTNECNN.

The first 21 residues, 1 to 21 (MKTLLLTLVVVTIVCLDLGYT), serve as a signal peptide directing secretion. 4 disulfides stabilise this stretch: Cys24-Cys43, Cys38-Cys60, Cys62-Cys73, and Cys74-Cys79.

This sequence belongs to the three-finger toxin family. Short-chain subfamily. Type I alpha-neurotoxin sub-subfamily. As to expression, expressed by the venom gland.

It is found in the secreted. Functionally, binds to muscle nicotinic acetylcholine receptor (nAChR) and inhibit acetylcholine from binding to the receptor, thereby impairing neuromuscular transmission. This is Short neurotoxin D from Aipysurus laevis (Olive sea snake).